Reading from the N-terminus, the 279-residue chain is Putative pyruvate, phosphate dikinase regulatory protein (279 aa).

153-160 (GVSRTSKT) is a binding site for ADP.

This sequence belongs to the pyruvate, phosphate/water dikinase regulatory protein family. PDRP subfamily.

The enzyme catalyses N(tele)-phospho-L-histidyl/L-threonyl-[pyruvate, phosphate dikinase] + ADP = N(tele)-phospho-L-histidyl/O-phospho-L-threonyl-[pyruvate, phosphate dikinase] + AMP + H(+). The catalysed reaction is N(tele)-phospho-L-histidyl/O-phospho-L-threonyl-[pyruvate, phosphate dikinase] + phosphate + H(+) = N(tele)-phospho-L-histidyl/L-threonyl-[pyruvate, phosphate dikinase] + diphosphate. In terms of biological role, bifunctional serine/threonine kinase and phosphorylase involved in the regulation of the pyruvate, phosphate dikinase (PPDK) by catalyzing its phosphorylation/dephosphorylation. This is Putative pyruvate, phosphate dikinase regulatory protein from Rhodopseudomonas palustris (strain BisB5).